A 557-amino-acid polypeptide reads, in one-letter code: Formate--tetrahydrofolate ligase (557 aa).

65–72 (TPAGEGKT) contacts ATP.

The protein belongs to the formate--tetrahydrofolate ligase family.

It carries out the reaction (6S)-5,6,7,8-tetrahydrofolate + formate + ATP = (6R)-10-formyltetrahydrofolate + ADP + phosphate. It participates in one-carbon metabolism; tetrahydrofolate interconversion. The protein is Formate--tetrahydrofolate ligase of Methylorubrum extorquens (strain CM4 / NCIMB 13688) (Methylobacterium extorquens).